A 250-amino-acid chain; its full sequence is MKLGLLCALLSLLAGHGWADTRAIGAEECRPNSQPWQAGLFHLTRLFCGATLISDRWLLTAAHCRKPYLWVRLGEHHLWKWEGPEQLFRVTDFFPHPGFNKDLSANDHNDDIMLIRLPRQARLSPAVQPLNLSQTCVSPGMQCLISGWGAVSSPKALFPVTLQCANISILENKLCHWAYPGHISDSMLCAGLWEGGRGSCQGDSGGPLVCNGTLAGVVSGGAEPCSRPRRPAVYTSVCHYLDWIQEIMEN.

An N-terminal signal peptide occupies residues 1 to 15 (MKLGLLCALLSLLAG). The region spanning 23 to 249 (AIGAEECRPN…YLDWIQEIME (227 aa)) is the Peptidase S1 domain. 6 disulfides stabilise this stretch: C29–C164, C48–C64, C136–C238, C143–C210, C175–C189, and C200–C225. Active-site charge relay system residues include H63 and D111. N-linked (GlcNAc...) asparagine glycans are attached at residues N131 and N166. Catalysis depends on S204, which acts as the Charge relay system. The N-linked (GlcNAc...) asparagine glycan is linked to N211.

Belongs to the peptidase S1 family. Kallikrein subfamily. As to expression, skin, thymus, trachea, cerebellum and spinal cord.

The protein localises to the secreted. The polypeptide is Kallikrein-9 (KLK9) (Homo sapiens (Human)).